A 474-amino-acid chain; its full sequence is MNTATSTAYSYKVVRQFAIMTVVWGIVGMGLGVFIAAQLAWPFLNFDLPWTSFGRLRPLHTNAVIFAFGGCALFATSYYSVQRTCQTTLFAPKLAAFTFWGWQLVILLAAISLPLGFTSSKEYAELEWPIDILITIVWVAYAVVFFGTLAKRKVKHIYVGNWFFGAFILTVAILHVVNNLEIPVTAMKSYSLYAGATDAMVQWWYGHNAVGFFLTAGFLGIMYYFVPKQAERPVYSYRLSIVHFWALITVYIWAGPHHLHYTALPDWAQSLGMVMSLILLAPSWGGMINGMMTLSGAWHKLRSDPILRFLVVSLAFYGMSTFEGPMMAIKTVNALSHYTDWTIGHVHAGALGWVAMVSIGALYHLVPKVFGREQMHSIGLINTHFWLATIGTVLYIASMWVNGIAQGLMWRAINDDGTLTYSFVESLEASHPGFVVRMIGGAIFFAGMLVMAYNTWRTVQAAKPAEYDAAAQIA.

The Cytoplasmic portion of the chain corresponds to 1–16; that stretch reads MNTATSTAYSYKVVRQ. A helical membrane pass occupies residues 17–37; the sequence is FAIMTVVWGIVGMGLGVFIAA. The Periplasmic portion of the chain corresponds to 38-60; that stretch reads QLAWPFLNFDLPWTSFGRLRPLH. A heme b-binding site is contributed by His60. Residues 61–81 traverse the membrane as a helical segment; that stretch reads TNAVIFAFGGCALFATSYYSV. Residues 82-96 are Cytoplasmic-facing; that stretch reads QRTCQTTLFAPKLAA. A helical transmembrane segment spans residues 97–117; that stretch reads FTFWGWQLVILLAAISLPLGF. The Periplasmic segment spans residues 118–129; it reads TSSKEYAELEWP. A helical membrane pass occupies residues 130–150; sequence IDILITIVWVAYAVVFFGTLA. The Cytoplasmic portion of the chain corresponds to 151-156; that stretch reads KRKVKH. The helical transmembrane segment at 157 to 177 threads the bilayer; that stretch reads IYVGNWFFGAFILTVAILHVV. Over 178–205 the chain is Periplasmic; it reads NNLEIPVTAMKSYSLYAGATDAMVQWWY. Residues 206-226 form a helical membrane-spanning segment; it reads GHNAVGFFLTAGFLGIMYYFV. His207 contributes to the Cu cation binding site. The Cytoplasmic segment spans residues 227–238; that stretch reads PKQAERPVYSYR. The helical transmembrane segment at 239-259 threads the bilayer; that stretch reads LSIVHFWALITVYIWAGPHHL. Cu cation contacts are provided by His257 and His258. The Periplasmic segment spans residues 260-270; the sequence is HYTALPDWAQS. Residues 271–291 traverse the membrane as a helical segment; that stretch reads LGMVMSLILLAPSWGGMINGM. Over 292–308 the chain is Cytoplasmic; it reads MTLSGAWHKLRSDPILR. Residues 309–329 form a helical membrane-spanning segment; sequence FLVVSLAFYGMSTFEGPMMAI. Residues 330-345 lie on the Periplasmic side of the membrane; it reads KTVNALSHYTDWTIGH. Heme b is bound by residues His345 and His347. The chain crosses the membrane as a helical span at residues 346–366; that stretch reads VHAGALGWVAMVSIGALYHLV. Residues 367 to 384 lie on the Cytoplasmic side of the membrane; that stretch reads PKVFGREQMHSIGLINTH. Residues 385–405 traverse the membrane as a helical segment; that stretch reads FWLATIGTVLYIASMWVNGIA. Over 406 to 432 the chain is Periplasmic; it reads QGLMWRAINDDGTLTYSFVESLEASHP. A helical membrane pass occupies residues 433-453; it reads GFVVRMIGGAIFFAGMLVMAY. The Cytoplasmic segment spans residues 454-474; that stretch reads NTWRTVQAAKPAEYDAAAQIA.

It belongs to the heme-copper respiratory oxidase family. As to quaternary structure, component of the cbb3-type cytochrome c oxidase at least composed of CcoN, CcoO, CcoQ and CcoP. Requires Cu(2+) as cofactor. It depends on heme b as a cofactor.

The protein resides in the cell inner membrane. The enzyme catalyses 4 Fe(II)-[cytochrome c] + O2 + 8 H(+)(in) = 4 Fe(III)-[cytochrome c] + 2 H2O + 4 H(+)(out). It participates in energy metabolism; oxidative phosphorylation. In terms of biological role, cbb3-type cytochrome c oxidase is the component of the respiratory chain that catalyzes the reduction of oxygen to water. Subunits CcoN and CcoO form the functional core of the enzyme complex. Subunits CcoP and CcoQ may optionally bind to the core. CcoN is the catalytic subunit of the enzyme. Electrons originating in cytochrome c or a quinol are transferred to the bimetallic center formed by a high-spin heme and copper B. The complex also functions as a proton pump. This is Cbb3-type cytochrome c oxidase subunit CcoN1 from Stutzerimonas stutzeri (Pseudomonas stutzeri).